The primary structure comprises 296 residues: tRNA-cytidine(32) 2-sulfurtransferase (296 aa).

The PP-loop motif motif lies at serine 72–serine 77. [4Fe-4S] cluster-binding residues include cysteine 147, cysteine 150, and cysteine 238.

This sequence belongs to the TtcA family. In terms of assembly, homodimer. Mg(2+) is required as a cofactor. Requires [4Fe-4S] cluster as cofactor.

The protein localises to the cytoplasm. The enzyme catalyses cytidine(32) in tRNA + S-sulfanyl-L-cysteinyl-[cysteine desulfurase] + AH2 + ATP = 2-thiocytidine(32) in tRNA + L-cysteinyl-[cysteine desulfurase] + A + AMP + diphosphate + H(+). It participates in tRNA modification. In terms of biological role, catalyzes the ATP-dependent 2-thiolation of cytidine in position 32 of tRNA, to form 2-thiocytidine (s(2)C32). The sulfur atoms are provided by the cysteine/cysteine desulfurase (IscS) system. The chain is tRNA-cytidine(32) 2-sulfurtransferase from Sinorhizobium fredii (strain NBRC 101917 / NGR234).